A 410-amino-acid polypeptide reads, in one-letter code: 2-oxoisovalerate dehydrogenase subunit alpha (410 aa).

The protein belongs to the BCKDHA family. In terms of assembly, heterodimer of an alpha and a beta chain. Thiamine diphosphate serves as cofactor.

The enzyme catalyses N(6)-[(R)-lipoyl]-L-lysyl-[protein] + 3-methyl-2-oxobutanoate + H(+) = N(6)-[(R)-S(8)-2-methylpropanoyldihydrolipoyl]-L-lysyl-[protein] + CO2. Functionally, the branched-chain alpha-keto dehydrogenase complex catalyzes the overall conversion of alpha-keto acids to acyl-CoA and CO(2). It contains multiple copies of three enzymatic components: branched-chain alpha-keto acid decarboxylase (E1), lipoamide acyltransferase (E2) and lipoamide dehydrogenase (E3). The chain is 2-oxoisovalerate dehydrogenase subunit alpha (bkdA1) from Pseudomonas aeruginosa (strain ATCC 15692 / DSM 22644 / CIP 104116 / JCM 14847 / LMG 12228 / 1C / PRS 101 / PAO1).